Reading from the N-terminus, the 446-residue chain is MTQLPSVSELINRTGSIGSSSNITRVPPMTTTSATNTTTAATATTVTSTTPRSENSYSPNSPYSLPTRPSNTSLTNYSAGSGITVASSSFQFSQPSPGRSKHNSTSSQSSSGDSFQQHQSNPSGVSMSSNTSPRTSIVQSMSSVPTPPSTGPAPQQFVYQESQLPVQPPPQQQQLQQPPPPPPQQQQHIYPQQQPNFPYHNNFVSPPTYTTAYPQYYYQPVMTPPHHQPHQQAPIHLANNVSILQSQAVMQNAYPTTHYLQHVGPHHIYANVNSQVYYQDMAREEANKALINKRRIIKRRTRTGCLTCRKRRIKCDERKPTCFNCERSKKSCLGYQDLSKLPPRKRNRDTSLDLPDGNQQQQQQQQNQQSIVGGAGNVSDEPHNETHQITSISGSSTNSRNLDMMIPQSFRNNISSQPINFYGPVATTASGASAVINRVSVADLLK.

Residues 1 to 24 (MTQLPSVSELINRTGSIGSSSNIT) show a composition bias toward polar residues. Residues 1-203 (MTQLPSVSEL…QPNFPYHNNF (203 aa)) are disordered. Residues 30–64 (TTTSATNTTTAATATTVTSTTPRSENSYSPNSPYS) show a composition bias toward low complexity. Over residues 67-86 (TRPSNTSLTNYSAGSGITVA) the composition is skewed to polar residues. Low complexity-rich tracts occupy residues 87–97 (SSSFQFSQPSP) and 104–120 (STSS…QHQS). Residues 121-144 (NPSGVSMSSNTSPRTSIVQSMSSV) show a composition bias toward polar residues. Residues 166 to 184 (VQPPPQQQQLQQPPPPPPQ) show a composition bias toward pro residues. Low complexity predominate over residues 185–195 (QQQHIYPQQQP). The segment at residues 305–332 (CLTCRKRRIKCDERKPTCFNCERSKKSC) is a DNA-binding region (zn(2)-C6 fungal-type). Residues 336 to 402 (QDLSKLPPRK…SGSSTNSRNL (67 aa)) form a disordered region. Positions 358-369 (NQQQQQQQQNQQ) are enriched in low complexity. Residues 387-401 (HQITSISGSSTNSRN) are compositionally biased toward polar residues.

The protein resides in the nucleus. Its function is as follows. Transcriptional regulator of the switch between 2 heritable states, the white and opaque states. These 2 cell types differ in many characteristics, including cell structure, mating competence, and virulence. Each state is heritable for many generations, and switching between states occurs stochastically, at low frequency. WOR2 is necessary for the stability of the opaque state phenotypic switching from the white to the opaque phase is a necessary step for mating. Plays a role in cell adhesion and pseudohyphal growth. This Candida albicans (strain SC5314 / ATCC MYA-2876) (Yeast) protein is White-opaque regulator 2 (WOR2).